Consider the following 105-residue polypeptide: MKTKTIFQLVALFAIGATAAPTGCGETRDIQAEAVKPRDVAASQTLHLDARSDIIKGGSSNLERREIWYWCRIGNCNAAFKSLAARCRHEKTAVHIAPESDSDSE.

The N-terminal stretch at 1–19 is a signal peptide; sequence MKTKTIFQLVALFAIGATA. The segment at 69–95 adopts a C2H2-type zinc-finger fold; it reads YWCRIGNCNAAFKSLAARCRHEKTAVH.

It is found in the secreted. Its subcellular location is the host nucleus. In terms of biological role, probable secreted effector that translocates into the nuclei of host cells to reprogram the expression of targeted genes by binding on effector binding elements in rice. The polypeptide is Host transcription reprogramming factor 7 (Pyricularia oryzae (strain 70-15 / ATCC MYA-4617 / FGSC 8958) (Rice blast fungus)).